A 457-amino-acid chain; its full sequence is MPKEANMASQDYATQRSSLDAQALINDAPLSRYQWLIAIVCFLIVFVDGIDTAAMGFIAPALAQDWGVDRSQLGPVMSAALGGMIIGALVSGPTADRFGRKIVLSMSMLVFGGFTLACAYSTNLDSLVIFRFLTGIGLGAAMPNATTLFSEYCPARIRSLLVTCMFCGYNLGMAIGGFISSWLIPAFGWHSLFLLGGWAPLILMLLVIFFLPESYRFLIVKGKNTKKVRQILSRIAPQKVQGVTEFHVPEEKVEAGTKKGVFGMLFSAKYVKGTVLLWVTYFMGLVMIYLLTSWLPTLMRETGASLERAAFLGGLFQFGGVLSALFIGWAMDRFNPNRIIAGFYLAAGIFAVIVGQSLSNPTLLALFILCAGIAVNGAQSSMPVLSARFYPTQCRATGVAWMSGIGRFGAVFGAWIGAVLLGNNWSFTMILSMLIIPAAAAAIAIFVKSLVAHTDAT.

Over 1–34 (MPKEANMASQDYATQRSSLDAQALINDAPLSRYQ) the chain is Cytoplasmic. A helical membrane pass occupies residues 35–55 (WLIAIVCFLIVFVDGIDTAAM). Residues 56–72 (GFIAPALAQDWGVDRSQ) are Periplasmic-facing. A helical transmembrane segment spans residues 73–93 (LGPVMSAALGGMIIGALVSGP). The Cytoplasmic segment spans residues 94–101 (TADRFGRK). The helical transmembrane segment at 102 to 122 (IVLSMSMLVFGGFTLACAYST) threads the bilayer. The Periplasmic segment spans residues 123-128 (NLDSLV). The helical transmembrane segment at 129–149 (IFRFLTGIGLGAAMPNATTLF) threads the bilayer. The Cytoplasmic portion of the chain corresponds to 150–168 (SEYCPARIRSLLVTCMFCG). A helical transmembrane segment spans residues 169–189 (YNLGMAIGGFISSWLIPAFGW). The Periplasmic segment spans residues 190–191 (HS). The chain crosses the membrane as a helical span at residues 192 to 212 (LFLLGGWAPLILMLLVIFFLP). Over 213–274 (ESYRFLIVKG…LFSAKYVKGT (62 aa)) the chain is Cytoplasmic. A helical membrane pass occupies residues 275-295 (VLLWVTYFMGLVMIYLLTSWL). The Periplasmic segment spans residues 296–310 (PTLMRETGASLERAA). Residues 311 to 331 (FLGGLFQFGGVLSALFIGWAM) traverse the membrane as a helical segment. The Cytoplasmic segment spans residues 332 to 338 (DRFNPNR). Residues 339 to 359 (IIAGFYLAAGIFAVIVGQSLS) form a helical membrane-spanning segment. Residues 360 to 363 (NPTL) lie on the Periplasmic side of the membrane. A helical transmembrane segment spans residues 364-384 (LALFILCAGIAVNGAQSSMPV). The Cytoplasmic segment spans residues 385-400 (LSARFYPTQCRATGVA). A helical membrane pass occupies residues 401 to 421 (WMSGIGRFGAVFGAWIGAVLL). The Periplasmic portion of the chain corresponds to 422-426 (GNNWS). Residues 427-447 (FTMILSMLIIPAAAAAIAIFV) traverse the membrane as a helical segment. The Cytoplasmic portion of the chain corresponds to 448 to 457 (KSLVAHTDAT).

It belongs to the major facilitator superfamily. Aromatic acid:H(+) symporter (AAHS) (TC 2.A.1.15) family. Homotrimer.

The protein localises to the cell inner membrane. In terms of biological role, uptake of 4-hydroxybenzoate (4-HB). Can also transport a variety of aromatic acids with hydroxyl substitutions at the 2-, 3- and 4-positions, such as salicylate, 2,4-dihydroxybenzoate, protocatechuate, 3-hydroxybenzoate, vanillate and gentisate. The polypeptide is 4-hydroxybenzoate transporter PcaK (Acinetobacter baylyi (strain ATCC 33305 / BD413 / ADP1)).